A 473-amino-acid chain; its full sequence is Photosystem II CP43 reaction center protein (473 aa).

The propeptide occupies Met1–Glu14. Thr15 is subject to N-acetylthreonine. Thr15 bears the Phosphothreonine mark. 5 helical membrane passes run Leu69–Ala93, Leu134–Asn155, Lys178–Thr200, Lys255–Ser275, and Trp291–Ala312. Residue Glu367 participates in [CaMn4O5] cluster binding. Residues Arg447 to Pro471 form a helical membrane-spanning segment.

The protein belongs to the PsbB/PsbC family. PsbC subfamily. PSII is composed of 1 copy each of membrane proteins PsbA, PsbB, PsbC, PsbD, PsbE, PsbF, PsbH, PsbI, PsbJ, PsbK, PsbL, PsbM, PsbT, PsbX, PsbY, PsbZ, Psb30/Ycf12, at least 3 peripheral proteins of the oxygen-evolving complex and a large number of cofactors. It forms dimeric complexes. Binds multiple chlorophylls and provides some of the ligands for the Ca-4Mn-5O cluster of the oxygen-evolving complex. It may also provide a ligand for a Cl- that is required for oxygen evolution. PSII binds additional chlorophylls, carotenoids and specific lipids. is required as a cofactor.

Its subcellular location is the plastid. The protein localises to the chloroplast thylakoid membrane. One of the components of the core complex of photosystem II (PSII). It binds chlorophyll and helps catalyze the primary light-induced photochemical processes of PSII. PSII is a light-driven water:plastoquinone oxidoreductase, using light energy to abstract electrons from H(2)O, generating O(2) and a proton gradient subsequently used for ATP formation. This Panax ginseng (Korean ginseng) protein is Photosystem II CP43 reaction center protein.